A 70-amino-acid chain; its full sequence is Large ribosomal subunit protein bL31 (70 aa).

Residues cysteine 16, cysteine 18, cysteine 37, and cysteine 40 each contribute to the Zn(2+) site. The segment at 48 to 70 is disordered; the sequence is QRQASSGGRVDKFNKRFGALGSK.

The protein belongs to the bacterial ribosomal protein bL31 family. Type A subfamily. Part of the 50S ribosomal subunit. Zn(2+) serves as cofactor.

Its function is as follows. Binds the 23S rRNA. This chain is Large ribosomal subunit protein bL31, found in Photobacterium profundum (strain SS9).